A 360-amino-acid chain; its full sequence is Phospho-N-acetylmuramoyl-pentapeptide-transferase (360 aa).

The next 10 membrane-spanning stretches (helical) occupy residues 21 to 41, 73 to 93, 97 to 117, 134 to 154, 168 to 188, 199 to 219, 239 to 259, 263 to 283, 288 to 308, and 338 to 358; these read YLTLRAILSTLTALLIAILIG, TMGGLLILAAIVVSGLLWADL, YVLVTLTVVVAYGIIGFVDDY, YFWQSVVALGVAFYLYSSATM, VFPQLGIFFIIITYFAIVGTS, GLAIVPTILVAGAFAIFAYVT, LVIVCTAMVGAGLGFLWFNTY, VFMGDVGSLALGGTLGVLAVL, LVLIIMGGVFVMETLSVILQV, and VIVRFWIISIILVLVGLATLK.

Belongs to the glycosyltransferase 4 family. MraY subfamily. The cofactor is Mg(2+).

It is found in the cell inner membrane. It carries out the reaction UDP-N-acetyl-alpha-D-muramoyl-L-alanyl-gamma-D-glutamyl-meso-2,6-diaminopimeloyl-D-alanyl-D-alanine + di-trans,octa-cis-undecaprenyl phosphate = di-trans,octa-cis-undecaprenyl diphospho-N-acetyl-alpha-D-muramoyl-L-alanyl-D-glutamyl-meso-2,6-diaminopimeloyl-D-alanyl-D-alanine + UMP. It functions in the pathway cell wall biogenesis; peptidoglycan biosynthesis. Its function is as follows. Catalyzes the initial step of the lipid cycle reactions in the biosynthesis of the cell wall peptidoglycan: transfers peptidoglycan precursor phospho-MurNAc-pentapeptide from UDP-MurNAc-pentapeptide onto the lipid carrier undecaprenyl phosphate, yielding undecaprenyl-pyrophosphoryl-MurNAc-pentapeptide, known as lipid I. The chain is Phospho-N-acetylmuramoyl-pentapeptide-transferase from Alteromonas mediterranea (strain DSM 17117 / CIP 110805 / LMG 28347 / Deep ecotype).